Consider the following 231-residue polypeptide: ATP-dependent dethiobiotin synthetase BioD 2 (231 aa).

Position 13-18 (13-18) interacts with ATP; the sequence is SVGKTV. Thr17 serves as a coordination point for Mg(2+). The active site involves Lys38. ATP contacts are provided by residues Asp55, 112-115, 172-173, 201-203, and Gln208; these read EGTG, NR, and PYL. Mg(2+) contacts are provided by Asp55 and Glu112.

Belongs to the dethiobiotin synthetase family. In terms of assembly, homodimer. The cofactor is Mg(2+).

It is found in the cytoplasm. The catalysed reaction is (7R,8S)-7,8-diammoniononanoate + CO2 + ATP = (4R,5S)-dethiobiotin + ADP + phosphate + 3 H(+). The protein operates within cofactor biosynthesis; biotin biosynthesis; biotin from 7,8-diaminononanoate: step 1/2. In terms of biological role, catalyzes a mechanistically unusual reaction, the ATP-dependent insertion of CO2 between the N7 and N8 nitrogen atoms of 7,8-diaminopelargonic acid (DAPA, also called 7,8-diammoniononanoate) to form a ureido ring. The protein is ATP-dependent dethiobiotin synthetase BioD 2 of Salmonella typhi.